The following is a 58-amino-acid chain: Large ribosomal subunit protein bL32 (58 aa).

Belongs to the bacterial ribosomal protein bL32 family.

The protein is Large ribosomal subunit protein bL32 of Thermobifida fusca (strain YX).